The primary structure comprises 395 residues: Digeranylgeranylglycerophospholipid reductase (395 aa).

Residues Ala15, Asp34, Cys45, Ala46, Gly48, Arg97, Ala121, Asp276, and Gly288 each coordinate FAD. 2 residues coordinate a 2,3-bis-O-(geranylgeranyl)-sn-glycerol 1-phospholipid: Arg329 and Gly365.

The protein belongs to the geranylgeranyl reductase family. DGGGPL reductase subfamily. Requires FAD as cofactor.

It carries out the reaction a 2,3-bis-O-phytanyl-sn-glycerol 1-phospholipid + 8 A = a 2,3-bis-O-(geranylgeranyl)-sn-glycerol 1-phospholipid + 8 AH2. It catalyses the reaction 2,3-bis-O-(phytanyl)-sn-glycerol 1-phosphate + 8 A = 2,3-bis-O-(geranylgeranyl)-sn-glycerol 1-phosphate + 8 AH2. The enzyme catalyses CDP-2,3-bis-O-(geranylgeranyl)-sn-glycerol + 8 AH2 = CDP-2,3-bis-O-(phytanyl)-sn-glycerol + 8 A. The catalysed reaction is archaetidylserine + 8 AH2 = 2,3-bis-O-phytanyl-sn-glycero-3-phospho-L-serine + 8 A. It functions in the pathway membrane lipid metabolism; glycerophospholipid metabolism. In terms of biological role, is involved in the reduction of 2,3-digeranylgeranylglycerophospholipids (unsaturated archaeols) into 2,3-diphytanylglycerophospholipids (saturated archaeols) in the biosynthesis of archaeal membrane lipids. Catalyzes the formation of archaetidic acid (2,3-di-O-phytanyl-sn-glyceryl phosphate) from 2,3-di-O-geranylgeranylglyceryl phosphate (DGGGP) via the hydrogenation of each double bond of the isoprenoid chains. Is also probably able to reduce double bonds of geranyl groups in CDP-2,3-bis-O-(geranylgeranyl)-sn-glycerol and archaetidylserine, thus acting at various stages in the biosynthesis of archaeal membrane lipids. The protein is Digeranylgeranylglycerophospholipid reductase of Thermococcus gammatolerans (strain DSM 15229 / JCM 11827 / EJ3).